The chain runs to 508 residues: ATP synthase subunit alpha, chloroplastic (508 aa).

Residue 170–177 coordinates ATP; the sequence is GDRQTGKT.

This sequence belongs to the ATPase alpha/beta chains family. As to quaternary structure, F-type ATPases have 2 components, CF(1) - the catalytic core - and CF(0) - the membrane proton channel. CF(1) has five subunits: alpha(3), beta(3), gamma(1), delta(1), epsilon(1). CF(0) has four main subunits: a, b, b' and c.

The protein resides in the plastid. The protein localises to the chloroplast thylakoid membrane. It catalyses the reaction ATP + H2O + 4 H(+)(in) = ADP + phosphate + 5 H(+)(out). Produces ATP from ADP in the presence of a proton gradient across the membrane. The alpha chain is a regulatory subunit. The sequence is that of ATP synthase subunit alpha, chloroplastic from Helianthus annuus (Common sunflower).